Consider the following 1162-residue polypeptide: DNA-directed RNA polymerase subunit beta 1 (1162 aa).

The protein belongs to the RNA polymerase beta chain family. As to quaternary structure, the RNAP catalytic core consists of 2 alpha, 1 beta, 1 beta' and 1 omega subunit. When a sigma factor is associated with the core the holoenzyme is formed, which can initiate transcription.

It carries out the reaction RNA(n) + a ribonucleoside 5'-triphosphate = RNA(n+1) + diphosphate. DNA-dependent RNA polymerase catalyzes the transcription of DNA into RNA using the four ribonucleoside triphosphates as substrates. The protein is DNA-directed RNA polymerase subunit beta 1 of Nocardia farcinica (strain IFM 10152).